The chain runs to 203 residues: NADH-quinone oxidoreductase subunit C (203 aa).

Belongs to the complex I 30 kDa subunit family. In terms of assembly, NDH-1 is composed of 14 different subunits. Subunits NuoB, C, D, E, F, and G constitute the peripheral sector of the complex.

It localises to the cell inner membrane. The enzyme catalyses a quinone + NADH + 5 H(+)(in) = a quinol + NAD(+) + 4 H(+)(out). Functionally, NDH-1 shuttles electrons from NADH, via FMN and iron-sulfur (Fe-S) centers, to quinones in the respiratory chain. The immediate electron acceptor for the enzyme in this species is believed to be ubiquinone. Couples the redox reaction to proton translocation (for every two electrons transferred, four hydrogen ions are translocated across the cytoplasmic membrane), and thus conserves the redox energy in a proton gradient. In Methylibium petroleiphilum (strain ATCC BAA-1232 / LMG 22953 / PM1), this protein is NADH-quinone oxidoreductase subunit C.